Here is a 285-residue protein sequence, read N- to C-terminus: MATSISARLIYYAKLSKPRIIWLLDLAALSGAFLSGKLMPLSILAVLVGGTFASAGSMIINEGIEIDKDKVMKRTSKRPTVMGYVSQKEAIYVGIALLTLGTLVGLLDNPLTSFFILLGGLVYVLVYTVWLKPRSPLNIVIGGLAGSAAAWAGYASTTSSFTIPSILLGLLIFMWTPGHFWALALKFKEDYSRAGIPMLPVIMPENFSAKMIALSNALMIPFALALYLYAGVIYGIVAGILSAVQMYFSVRLMRNPTGEEAWRSFKFSSPYLAILLILIILTRLI.

The next 8 helical transmembrane spans lie at R19 to M39, P40 to I60, A90 to P110, L111 to L131, S135 to A155, S165 to L185, I220 to I240, and F265 to I285.

This sequence belongs to the UbiA prenyltransferase family. Protoheme IX farnesyltransferase subfamily.

It localises to the cell membrane. It carries out the reaction heme b + (2E,6E)-farnesyl diphosphate + H2O = Fe(II)-heme o + diphosphate. It participates in porphyrin-containing compound metabolism; heme O biosynthesis; heme O from protoheme: step 1/1. Functionally, converts heme B (protoheme IX) to heme O by substitution of the vinyl group on carbon 2 of heme B porphyrin ring with a hydroxyethyl farnesyl side group. The chain is Protoheme IX farnesyltransferase from Metallosphaera sedula (strain ATCC 51363 / DSM 5348 / JCM 9185 / NBRC 15509 / TH2).